The chain runs to 262 residues: Serine O-acetyltransferase (262 aa).

Residue C107 is the Acyl-thioester intermediate of the active site. K128 is a binding site for substrate. The active-site Proton acceptor is H200. E202 is a catalytic residue. Position 214 (R214) interacts with substrate.

Belongs to the MetA family.

Its subcellular location is the cytoplasm. The catalysed reaction is L-serine + acetyl-CoA = O-acetyl-L-serine + CoA. The enzyme catalyses L-homoserine + acetyl-CoA = O-acetyl-L-homoserine + CoA. It participates in amino-acid biosynthesis; L-cysteine biosynthesis; L-cysteine from L-serine: step 1/2. Transfers an acetyl group from acetyl-CoA to L-serine, forming acetyl-L-serine. In vitro, also has homoserine acetyl transferase activity. The sequence is that of Serine O-acetyltransferase from Lactobacillus acidophilus.